Reading from the N-terminus, the 317-residue chain is NAD-dependent protein deacetylase Sirt6 (317 aa).

A Deacetylase sirtuin-type domain is found at 27–273; that stretch reads DEVVAEKCQE…SKVCKLLGVE (247 aa). NAD(+)-binding residues include Ala53, Thr57, Phe64, Arg65, Trp71, Gln113, and His133. Residue His133 is the Proton acceptor of the active site. Cys141, Cys144, Cys166, and Cys177 together coordinate Zn(2+). Gly215, Asn241, Gln243, and Val259 together coordinate NAD(+).

This sequence belongs to the sirtuin family. Class IV subfamily. Zn(2+) is required as a cofactor. In terms of tissue distribution, widely expressed.

It is found in the nucleus. It localises to the chromosome. The catalysed reaction is N(6)-acetyl-L-lysyl-[protein] + NAD(+) + H2O = 2''-O-acetyl-ADP-D-ribose + nicotinamide + L-lysyl-[protein]. NAD-dependent histone deacylase that acts as a regulator of life span. In Drosophila melanogaster (Fruit fly), this protein is NAD-dependent protein deacetylase Sirt6.